The chain runs to 427 residues: Enolase (427 aa).

Q163 serves as a coordination point for (2R)-2-phosphoglycerate. E205 functions as the Proton donor in the catalytic mechanism. Positions 242, 285, and 312 each coordinate Mg(2+). (2R)-2-phosphoglycerate is bound by residues K337, R366, S367, and K388. K337 serves as the catalytic Proton acceptor.

This sequence belongs to the enolase family. Requires Mg(2+) as cofactor.

It localises to the cytoplasm. The protein resides in the secreted. Its subcellular location is the cell surface. The catalysed reaction is (2R)-2-phosphoglycerate = phosphoenolpyruvate + H2O. It functions in the pathway carbohydrate degradation; glycolysis; pyruvate from D-glyceraldehyde 3-phosphate: step 4/5. In terms of biological role, catalyzes the reversible conversion of 2-phosphoglycerate (2-PG) into phosphoenolpyruvate (PEP). It is essential for the degradation of carbohydrates via glycolysis. In Rhodopseudomonas palustris (strain BisA53), this protein is Enolase.